The sequence spans 219 residues: Phosphate-specific transport system accessory protein PhoU homolog 1 (219 aa).

Belongs to the PhoU family. As to quaternary structure, homodimer.

Its subcellular location is the cytoplasm. In terms of biological role, plays a role in the regulation of phosphate uptake. The chain is Phosphate-specific transport system accessory protein PhoU homolog 1 from Methanothermobacter thermautotrophicus (strain ATCC 29096 / DSM 1053 / JCM 10044 / NBRC 100330 / Delta H) (Methanobacterium thermoautotrophicum).